We begin with the raw amino-acid sequence, 349 residues long: Fructose-1,6-bisphosphatase class 1 (349 aa).

Mg(2+) is bound by residues Glu91, Asp110, Leu112, and Asp113. Substrate contacts are provided by residues 113 to 116 and Asn205; that span reads DGSS. Glu277 provides a ligand contact to Mg(2+).

The protein belongs to the FBPase class 1 family. As to quaternary structure, homotetramer. Requires Mg(2+) as cofactor.

It is found in the cytoplasm. The enzyme catalyses beta-D-fructose 1,6-bisphosphate + H2O = beta-D-fructose 6-phosphate + phosphate. It functions in the pathway carbohydrate biosynthesis; gluconeogenesis. In Rhizobium meliloti (strain 1021) (Ensifer meliloti), this protein is Fructose-1,6-bisphosphatase class 1.